Here is a 375-residue protein sequence, read N- to C-terminus: Chaperone protein DnaJ (375 aa).

One can recognise a J domain in the interval 5–70; it reads DYYEVLGVNR…RKRASYDQFG (66 aa). Residues 133–211 form a CR-type zinc finger; sequence GLSRTIKVPT…CHGQGRQQQT (79 aa). 8 residues coordinate Zn(2+): C146, C149, C163, C166, C185, C188, C199, and C202. CXXCXGXG motif repeat units lie at residues 146–153, 163–170, 185–192, and 199–206; these read CKTCNGSG, CPRCNGSG, CSVCRGRG, and CTDCHGQG.

The protein belongs to the DnaJ family. Homodimer. The cofactor is Zn(2+).

Its subcellular location is the cytoplasm. Its function is as follows. Participates actively in the response to hyperosmotic and heat shock by preventing the aggregation of stress-denatured proteins and by disaggregating proteins, also in an autonomous, DnaK-independent fashion. Unfolded proteins bind initially to DnaJ; upon interaction with the DnaJ-bound protein, DnaK hydrolyzes its bound ATP, resulting in the formation of a stable complex. GrpE releases ADP from DnaK; ATP binding to DnaK triggers the release of the substrate protein, thus completing the reaction cycle. Several rounds of ATP-dependent interactions between DnaJ, DnaK and GrpE are required for fully efficient folding. Also involved, together with DnaK and GrpE, in the DNA replication of plasmids through activation of initiation proteins. This is Chaperone protein DnaJ from Coxiella burnetii (strain CbuK_Q154) (Coxiella burnetii (strain Q154)).